Here is a 97-residue protein sequence, read N- to C-terminus: Large ribosomal subunit protein bL27 (97 aa).

The propeptide occupies 1 to 12 (MLKMNLANLQLF). The segment at 14 to 37 (HKKGGGSTSNGRDSQAKRLGAKAA) is disordered.

This sequence belongs to the bacterial ribosomal protein bL27 family. In terms of processing, the N-terminus is cleaved by ribosomal processing cysteine protease Prp.

In Streptococcus uberis (strain ATCC BAA-854 / 0140J), this protein is Large ribosomal subunit protein bL27.